The primary structure comprises 216 residues: Flagellin B2 (216 aa).

A propeptide spanning residues 1–12 (MKIKEFMSNKKG) is cleaved from the precursor. Residues Asn-38, Asn-72, Asn-77, Asn-113, Asn-172, and Asn-208 are each glycosylated (N-linked (GlcNAc...) asparagine).

Belongs to the archaeal flagellin family. In terms of processing, N-linked glycans consist of the 779 Da trisaccharide beta-ManNAc(Thr)-(1-4)-beta-GlcNAc3NAcA-(1-3)-beta-GlcNAc.

It localises to the archaeal flagellum. In terms of biological role, flagellin is the subunit protein which polymerizes to form the filaments of archaeal flagella. The chain is Flagellin B2 (flaB2) from Methanococcus voltae.